A 422-amino-acid polypeptide reads, in one-letter code: UDP-N-acetylmuramoylalanine--D-glutamate ligase (422 aa).

An ATP-binding site is contributed by 102 to 108 (GTNGKTT).

This sequence belongs to the MurCDEF family.

It is found in the cytoplasm. It carries out the reaction UDP-N-acetyl-alpha-D-muramoyl-L-alanine + D-glutamate + ATP = UDP-N-acetyl-alpha-D-muramoyl-L-alanyl-D-glutamate + ADP + phosphate + H(+). Its pathway is cell wall biogenesis; peptidoglycan biosynthesis. Cell wall formation. Catalyzes the addition of glutamate to the nucleotide precursor UDP-N-acetylmuramoyl-L-alanine (UMA). The protein is UDP-N-acetylmuramoylalanine--D-glutamate ligase of Helicobacter pylori (strain J99 / ATCC 700824) (Campylobacter pylori J99).